A 215-amino-acid polypeptide reads, in one-letter code: 3-isopropylmalate dehydratase small subunit (215 aa).

It belongs to the LeuD family. LeuD type 1 subfamily. As to quaternary structure, heterodimer of LeuC and LeuD.

The catalysed reaction is (2R,3S)-3-isopropylmalate = (2S)-2-isopropylmalate. It functions in the pathway amino-acid biosynthesis; L-leucine biosynthesis; L-leucine from 3-methyl-2-oxobutanoate: step 2/4. In terms of biological role, catalyzes the isomerization between 2-isopropylmalate and 3-isopropylmalate, via the formation of 2-isopropylmaleate. The protein is 3-isopropylmalate dehydratase small subunit of Teredinibacter turnerae (strain ATCC 39867 / T7901).